We begin with the raw amino-acid sequence, 153 residues long: uncharacterized protein (153 aa).

The signal sequence occupies residues 1–22 (MKAFNKLFSLVVASVLVFSLAG). Cys23 carries the N-palmitoyl cysteine lipid modification. The S-diacylglycerol cysteine moiety is linked to residue Cys23.

It to L.monocytogenes lmo0207.

Its subcellular location is the cell membrane. This is an uncharacterized protein from Escherichia coli (strain K12).